The chain runs to 195 residues: Molybdenum cofactor guanylyltransferase (195 aa).

Residues 12-14 (LAG), Lys25, Asn53, Asp70, and Asp100 contribute to the GTP site. Position 100 (Asp100) interacts with Mg(2+).

Belongs to the MobA family. In terms of assembly, monomer. The cofactor is Mg(2+).

It localises to the cytoplasm. The catalysed reaction is Mo-molybdopterin + GTP + H(+) = Mo-molybdopterin guanine dinucleotide + diphosphate. Transfers a GMP moiety from GTP to Mo-molybdopterin (Mo-MPT) cofactor (Moco or molybdenum cofactor) to form Mo-molybdopterin guanine dinucleotide (Mo-MGD) cofactor. In Vibrio parahaemolyticus serotype O3:K6 (strain RIMD 2210633), this protein is Molybdenum cofactor guanylyltransferase.